Consider the following 353-residue polypeptide: D-alanine--D-alanine ligase A (353 aa).

The ATP-grasp domain occupies 141-346 (KRLVNEAGLS…YPEIINRLVA (206 aa)). Residue 169-224 (EQALGLPIFIKPARQGSSVGVHKVVTEADYQAAMSDGFIYDDKLLAEEFIQAREVE) participates in ATP binding. 3 residues coordinate Mg(2+): Asp-300, Glu-313, and Asn-315.

The protein belongs to the D-alanine--D-alanine ligase family. The cofactor is Mg(2+). Mn(2+) serves as cofactor.

The protein localises to the cytoplasm. The catalysed reaction is 2 D-alanine + ATP = D-alanyl-D-alanine + ADP + phosphate + H(+). It functions in the pathway cell wall biogenesis; peptidoglycan biosynthesis. Cell wall formation. The protein is D-alanine--D-alanine ligase A of Brucella melitensis biotype 1 (strain ATCC 23456 / CCUG 17765 / NCTC 10094 / 16M).